A 731-amino-acid polypeptide reads, in one-letter code: E3 ubiquitin-protein ligase COP1 (731 aa).

The interval 1 to 40 (MSGSRQAGSGSAGTSPGSSAASSVTSASSSLSSSPSPPSV) is disordered. A Nuclear localization signal 1 motif is present at residues 109–113 (GSRKR). An RING-type zinc finger spans residues 136–174 (CPICFDMIEEAYMTKCGHSFCYKCIHQSLEDNNRCPKCN). Residues 195-206 (KQKQRFEEKRFK) carry the Nuclear localization signal 2 motif. Residues 233–301 (LDLANVNLML…DIKRVEEMSG (69 aa)) are a coiled coil. The Nuclear export signal signature appears at 235–245 (LANVNLMLELL). Residues 305 to 325 (PVSEDSTVPQFEAPSPSHSSI) are disordered. 7 WD repeats span residues 419 to 458 (NGSSIVSSIEFDRDCDYFAIAGVTKKIKVYEYDTVIQDAV), 468 to 508 (TCNS…RSKV), 511 to 551 (EHEK…SVAS), 553 to 593 (EAKA…QPIM), 597 to 635 (GHRKAVSYAKFVSGEEIVSASTDSQLKLWNVGKPYCLRS), 638 to 677 (GHINEKNFVGLASNGDYIACGSENNSLYLYYKGLSKTLLT), and 691 to 729 (RKEDDTNEFVSAVCWRALPDGESNVLIAANSQGTIKVLE). Residues 643–645 (KNF) form an interaction with TRIB1 region.

This sequence belongs to the COP1 family. In terms of assembly, homodimer. Homodimerization is mediated by the coiled coil domain. Component of the DCX DET1-COP1 ubiquitin ligase complex at least composed of RBX1, DET1, DDB1, CUL4A and COP1. Isoform 2 does not interact with CUL4A but still binds to RBX1, suggesting that the interaction may be mediated by another cullin protein. Isoform 1 and isoform 2 interact with CUL5 but not with CUL1, CUL2 not CUL3. Interacts with bZIP transcription factors JUN, JUNB and JUND but not with FOS, ATF2 nor XBP1. Interacts with p53 (TP53). Interacts with COPS6; this interaction stabilizes RFWD2 through reducing its auto-ubiquitination and decelerating its turnover rate. Interacts with SFN; this interaction leads to SFN degradation. Isoform 4 forms heterodimers with isoform 1, preventing its association with DET1. Interacts with p53/TP53 and MTA1. Interacts with TRIB1 (via C-terminus) and TRIB2. Autoubiquitinated. MTA1 destabilizes it by promoting its autoubiquitination. In terms of tissue distribution, ubiquitously expressed at low level. Expressed at higher level in testis, placenta, skeletal muscle and heart.

The protein localises to the nucleus speckle. Its subcellular location is the cytoplasm. The enzyme catalyses S-ubiquitinyl-[E2 ubiquitin-conjugating enzyme]-L-cysteine + [acceptor protein]-L-lysine = [E2 ubiquitin-conjugating enzyme]-L-cysteine + N(6)-ubiquitinyl-[acceptor protein]-L-lysine.. Its pathway is protein modification; protein ubiquitination. TRIB1 competes with substrates for RFWD2 binding. E3 ubiquitin-protein ligase that mediates ubiquitination and subsequent proteasomal degradation of target proteins. E3 ubiquitin ligases accept ubiquitin from an E2 ubiquitin-conjugating enzyme in the form of a thioester and then directly transfers the ubiquitin to targeted substrates. Involved in JUN ubiquitination and degradation. Directly involved in p53 (TP53) ubiquitination and degradation, thereby abolishing p53-dependent transcription and apoptosis. Ubiquitinates p53 independently of MDM2 or RCHY1. Probably mediates E3 ubiquitin ligase activity by functioning as the essential RING domain subunit of larger E3 complexes. In contrast, it does not constitute the catalytic RING subunit in the DCX DET1-COP1 complex that negatively regulates JUN, the ubiquitin ligase activity being mediated by RBX1. Involved in 14-3-3 protein sigma/SFN ubiquitination and proteasomal degradation, leading to AKT activation and promotion of cell survival. Ubiquitinates MTA1 leading to its proteasomal degradation. Upon binding to TRIB1, ubiquitinates CEBPA, which lacks a canonical COP1-binding motif. This chain is E3 ubiquitin-protein ligase COP1, found in Homo sapiens (Human).